A 210-amino-acid chain; its full sequence is Ribonuclease HII (210 aa).

An RNase H type-2 domain is found at 17 to 206; the sequence is DIICGVDEAG…VRALLGGVTP (190 aa). Aspartate 23, glutamate 24, and aspartate 115 together coordinate a divalent metal cation.

The protein belongs to the RNase HII family. Mn(2+) is required as a cofactor. It depends on Mg(2+) as a cofactor.

The protein localises to the cytoplasm. The enzyme catalyses Endonucleolytic cleavage to 5'-phosphomonoester.. Functionally, endonuclease that specifically degrades the RNA of RNA-DNA hybrids. The polypeptide is Ribonuclease HII (Janthinobacterium sp. (strain Marseille) (Minibacterium massiliensis)).